We begin with the raw amino-acid sequence, 874 residues long: Interleukin-12 receptor subunit beta-2 (874 aa).

An N-terminal signal peptide occupies residues 1-23 (MAQTVRECSLALLFLFMWLLIKA). Over 24 to 637 (NIDVCKLGTV…REFCPQGKAN (614 aa)) the chain is Extracellular. Residues N48, N101, N114, N142, N151, N169, N179, N224, N252, N279, N287, N323, N391, and N495 are each glycosylated (N-linked (GlcNAc...) asparagine). Fibronectin type-III domains follow at residues 139–237 (PPQN…FLDI), 242–335 (PPWD…TPEE), 336–430 (EPVG…NIVD), 438–530 (APHQ…IRGD), and 536–635 (PVSG…PQGK). Positions 321–325 (WSNWS) match the WSXWS motif motif. A helical membrane pass occupies residues 638–658 (WKAFVISSICIAIITVGTFSI). At 659–874 (RYFRQKAFTL…GYDSLMSNEA (216 aa)) the chain is on the cytoplasmic side. The short motif at 677–685 (YSRTIPDPA) is the Box 1 motif element. Phosphotyrosine is present on residues Y757, Y804, and Y811.

This sequence belongs to the type I cytokine receptor family. Type 2 subfamily. In terms of assembly, heterodimer/heterooligomer; disulfide-linked. The functional high affinity IL12 receptor is composed of I12RB1 and IL12RB2. Il12RB2 binds JAK2 (via its N-terminal) through a membrane-proximal region of the cytoplasmic domain. Post-translationally, on IL12 stimulation, phosphorylated on C-terminal tyrosine residues. Phosphorylation of any one of Tyr-757, Tyr-804 or Tyr-811 can activate STAT4, IFN-gamma production, and T-cell proliferation. Tyr-811 is the dominant site of cell proliferation. In terms of tissue distribution, expressed in developing T-helper (TH) cells.

The protein resides in the membrane. Its function is as follows. Receptor for interleukin-12. This subunit is the signaling component coupling to the JAK2/STAT4 pathway. Promotes the proliferation of T-cells as well as NK cells. Induces the promotion of T-cells towards the Th1 phenotype by strongly enhancing IFN-gamma production. Can also activate STAT3. The chain is Interleukin-12 receptor subunit beta-2 (Il12rb2) from Mus musculus (Mouse).